Here is a 201-residue protein sequence, read N- to C-terminus: MSRYRGPRFKKIRRLGALPGLTSKRPKAGSDLRNQSRSVKKSQYRIRLEEKQKLRFHYGLTERQLLKYVRIAGKAKGSTGQVLLQLLEMRLDNILFRLGMALTIPQARQLVNHGHILVNGRIVDIPSYRCKPRDIITVKDEQNSRTLVQNLLDSSAPEELPNHLTLHTFQYEGLVNQIIDRKCVGLKINELLVVEYYSRQT.

One can recognise an S4 RNA-binding domain in the interval 89-152 (MRLDNILFRL…NSRTLVQNLL (64 aa)).

This sequence belongs to the universal ribosomal protein uS4 family. In terms of assembly, part of the 30S ribosomal subunit. Contacts protein S5. The interaction surface between S4 and S5 is involved in control of translational fidelity.

It localises to the plastid. The protein localises to the chloroplast. Its function is as follows. One of the primary rRNA binding proteins, it binds directly to 16S rRNA where it nucleates assembly of the body of the 30S subunit. With S5 and S12 plays an important role in translational accuracy. The sequence is that of Small ribosomal subunit protein uS4c (rps4) from Capsella bursa-pastoris (Shepherd's purse).